The following is a 115-amino-acid chain: MAVRYELAIGLNKGHKTSKIRNVKYTGDKKVKGLRGSRLKNIQTRHTKFMRDLVREVVGHAPYEKRTMELLKVSKDKRALKFLKRRLGTHIRAKRKREELSNILTQLRKAQTHAK.

Belongs to the eukaryotic ribosomal protein eL36 family. Component of the large ribosomal subunit.

It localises to the cytoplasm. Its subcellular location is the cytosol. Functionally, component of the large ribosomal subunit. This chain is Large ribosomal subunit protein eL36 (RpL36), found in Drosophila melanogaster (Fruit fly).